Here is a 286-residue protein sequence, read N- to C-terminus: Haloalkane dehalogenase 2 (286 aa).

An AB hydrolase-1 domain is found at 35 to 134 (PPILLCHGNP…RVRGVVLGNT (100 aa)). D109 acts as the Nucleophile in catalysis. The Proton donor role is filled by D238. H267 acts as the Proton acceptor in catalysis.

This sequence belongs to the haloalkane dehalogenase family. Type 1 subfamily. As to quaternary structure, monomer.

It carries out the reaction 1-haloalkane + H2O = a halide anion + a primary alcohol + H(+). In terms of biological role, catalyzes hydrolytic cleavage of carbon-halogen bonds in halogenated aliphatic compounds, leading to the formation of the corresponding primary alcohols, halide ions and protons. The polypeptide is Haloalkane dehalogenase 2 (dhmA2) (Mycobacterium bovis (strain ATCC BAA-935 / AF2122/97)).